A 439-amino-acid chain; its full sequence is uncharacterized protein (439 aa).

CBS domains are found at residues 195–254 and 256–314; these read LTPA…SIEK and MTKN…KQPQ.

This is an uncharacterized protein from Bacillus subtilis (strain 168).